The chain runs to 211 residues: tRNA (guanine-N(7)-)-methyltransferase (211 aa).

Positions 43, 68, 95, and 117 each coordinate S-adenosyl-L-methionine. Residues Lys-121, Asp-153, and 190-193 contribute to the substrate site; that span reads TEYE.

The protein belongs to the class I-like SAM-binding methyltransferase superfamily. TrmB family.

It carries out the reaction guanosine(46) in tRNA + S-adenosyl-L-methionine = N(7)-methylguanosine(46) in tRNA + S-adenosyl-L-homocysteine. It functions in the pathway tRNA modification; N(7)-methylguanine-tRNA biosynthesis. Functionally, catalyzes the formation of N(7)-methylguanine at position 46 (m7G46) in tRNA. This Clostridium kluyveri (strain ATCC 8527 / DSM 555 / NBRC 12016 / NCIMB 10680 / K1) protein is tRNA (guanine-N(7)-)-methyltransferase.